The chain runs to 314 residues: Acetyl-coenzyme A carboxylase carboxyl transferase subunit alpha (314 aa).

Positions 32-289 (EIDMLEASLK…KKMFLKHLNE (258 aa)) constitute a CoA carboxyltransferase C-terminal domain.

It belongs to the AccA family. As to quaternary structure, acetyl-CoA carboxylase is a heterohexamer composed of biotin carboxyl carrier protein (AccB), biotin carboxylase (AccC) and two subunits each of ACCase subunit alpha (AccA) and ACCase subunit beta (AccD).

The protein localises to the cytoplasm. The catalysed reaction is N(6)-carboxybiotinyl-L-lysyl-[protein] + acetyl-CoA = N(6)-biotinyl-L-lysyl-[protein] + malonyl-CoA. It functions in the pathway lipid metabolism; malonyl-CoA biosynthesis; malonyl-CoA from acetyl-CoA: step 1/1. Its function is as follows. Component of the acetyl coenzyme A carboxylase (ACC) complex. First, biotin carboxylase catalyzes the carboxylation of biotin on its carrier protein (BCCP) and then the CO(2) group is transferred by the carboxyltransferase to acetyl-CoA to form malonyl-CoA. This Staphylococcus epidermidis (strain ATCC 35984 / DSM 28319 / BCRC 17069 / CCUG 31568 / BM 3577 / RP62A) protein is Acetyl-coenzyme A carboxylase carboxyl transferase subunit alpha.